Consider the following 236-residue polypeptide: RING-H2 finger protein ATL7 (236 aa).

A helical transmembrane segment spans residues 31-51 (AFIFSVPICFTFIVLFVLYVI). An RING-type; atypical zinc finger spans residues 111–153 (CSVCLGDYQAEEKLQQMPSCGHTFHMECIDLWLTSHTTCPLCR). Over residues 176–196 (ENSNGGEASTQPDSQSATEAI) the composition is skewed to polar residues. The segment at 176–236 (ENSNGGEAST…SDGCCTCRLG (61 aa)) is disordered. The span at 197-221 (SHTDDVEEGNRDSQEVSKETEENDR) shows a compositional bias: basic and acidic residues.

It belongs to the RING-type zinc finger family. ATL subfamily.

Its subcellular location is the membrane. The enzyme catalyses S-ubiquitinyl-[E2 ubiquitin-conjugating enzyme]-L-cysteine + [acceptor protein]-L-lysine = [E2 ubiquitin-conjugating enzyme]-L-cysteine + N(6)-ubiquitinyl-[acceptor protein]-L-lysine.. Its pathway is protein modification; protein ubiquitination. This Arabidopsis thaliana (Mouse-ear cress) protein is RING-H2 finger protein ATL7 (ATL7).